A 119-amino-acid chain; its full sequence is Protein yippee-like 1 (119 aa).

A Yippee domain is found at 19-116 (RTYSCIHCRA…IELAHMIKDN (98 aa)). Residues cysteine 23, cysteine 26, cysteine 79, and cysteine 82 each coordinate Zn(2+). A Nuclear localization signal motif is present at residues 99–104 (KYKEGK).

The protein belongs to the yippee family.

The protein localises to the nucleus. In terms of biological role, may play a role in epithelioid conversion of fibroblasts. The polypeptide is Protein yippee-like 1 (YPEL1) (Chlorocebus aethiops (Green monkey)).